The following is a 158-amino-acid chain: Small ribosomal subunit protein bS6 (158 aa).

The segment covering 92–149 has biased composition (basic and acidic residues); the sequence is RVDEHEEGPSAMMRKADRDRERDDRGPREGGFRGDREGRGDRDGFRGDRGPRRPREDA. The tract at residues 92–158 is disordered; sequence RVDEHEEGPS…ADAPAAAVEE (67 aa).

It belongs to the bacterial ribosomal protein bS6 family.

Its function is as follows. Binds together with bS18 to 16S ribosomal RNA. The chain is Small ribosomal subunit protein bS6 from Rhodopseudomonas palustris (strain ATCC BAA-98 / CGA009).